A 164-amino-acid polypeptide reads, in one-letter code: Transmembrane protein B169L (164 aa).

2 consecutive transmembrane segments (helical) span residues Asn28–Cys48 and Thr60–Asn80. Asn88 is a glycosylation site (N-linked (GlcNAc...) asparagine; by host). Residues Ser114–Ala142 form a disordered region.

Belongs to the asfivirus B169L family.

The protein resides in the host membrane. It localises to the virion. The protein is Transmembrane protein B169L of Ornithodoros (relapsing fever ticks).